Reading from the N-terminus, the 675-residue chain is DNA gyrase subunit B (675 aa).

Residues serine 453 to proline 567 enclose the Toprim domain. Mg(2+)-binding residues include glutamate 459, aspartate 532, and aspartate 534.

This sequence belongs to the type II topoisomerase GyrB family. As to quaternary structure, heterotetramer, composed of two GyrA and two GyrB chains. In the heterotetramer, GyrA contains the active site tyrosine that forms a transient covalent intermediate with DNA, while GyrB binds cofactors and catalyzes ATP hydrolysis. Mg(2+) is required as a cofactor. Mn(2+) serves as cofactor. Requires Ca(2+) as cofactor.

It localises to the cytoplasm. It carries out the reaction ATP-dependent breakage, passage and rejoining of double-stranded DNA.. Its function is as follows. A type II topoisomerase that negatively supercoils closed circular double-stranded (ds) DNA in an ATP-dependent manner to modulate DNA topology and maintain chromosomes in an underwound state. Negative supercoiling favors strand separation, and DNA replication, transcription, recombination and repair, all of which involve strand separation. Also able to catalyze the interconversion of other topological isomers of dsDNA rings, including catenanes and knotted rings. Type II topoisomerases break and join 2 DNA strands simultaneously in an ATP-dependent manner. The sequence is that of DNA gyrase subunit B from Mycobacterium tuberculosis (strain ATCC 25177 / H37Ra).